A 248-amino-acid chain; its full sequence is Triosephosphate isomerase (248 aa).

Residue 9–11 (NWK) coordinates substrate. The Electrophile role is filled by His92. Glu164 (proton acceptor) is an active-site residue. Substrate-binding positions include Gly170, Ser209, and 230–231 (GG).

This sequence belongs to the triosephosphate isomerase family. As to quaternary structure, homodimer.

It localises to the cytoplasm. It carries out the reaction D-glyceraldehyde 3-phosphate = dihydroxyacetone phosphate. Its pathway is carbohydrate biosynthesis; gluconeogenesis. It functions in the pathway carbohydrate degradation; glycolysis; D-glyceraldehyde 3-phosphate from glycerone phosphate: step 1/1. Involved in the gluconeogenesis. Catalyzes stereospecifically the conversion of dihydroxyacetone phosphate (DHAP) to D-glyceraldehyde-3-phosphate (G3P). The chain is Triosephosphate isomerase from Thiobacillus denitrificans (strain ATCC 25259 / T1).